We begin with the raw amino-acid sequence, 158 residues long: Transcription antitermination protein NusB (158 aa).

The protein belongs to the NusB family.

Functionally, involved in transcription antitermination. Required for transcription of ribosomal RNA (rRNA) genes. Binds specifically to the boxA antiterminator sequence of the ribosomal RNA (rrn) operons. This Bartonella henselae (strain ATCC 49882 / DSM 28221 / CCUG 30454 / Houston 1) (Rochalimaea henselae) protein is Transcription antitermination protein NusB.